The following is a 186-amino-acid chain: Elongation factor P (186 aa).

Belongs to the elongation factor P family.

The protein resides in the cytoplasm. It participates in protein biosynthesis; polypeptide chain elongation. Its function is as follows. Involved in peptide bond synthesis. Stimulates efficient translation and peptide-bond synthesis on native or reconstituted 70S ribosomes in vitro. Probably functions indirectly by altering the affinity of the ribosome for aminoacyl-tRNA, thus increasing their reactivity as acceptors for peptidyl transferase. This chain is Elongation factor P, found in Prochlorococcus marinus (strain MIT 9303).